The sequence spans 133 residues: DNA-binding protein inhibitor ID-2-A (133 aa).

Residues 23-75 (ARSKTPVDDPMSLLYNMNDCYSKLKELVPSIPQNKKVSKMEILQHVIDYILDL) enclose the bHLH domain. The Nuclear export signal signature appears at 106-115 (LNTDISILSL).

Heterodimer with other HLH proteins. In terms of tissue distribution, in the embryo, expressed in a range of tissues, with primary expression in the developing pronephros; expressed in the pronephric anlage, and by the swimming tadpole stages expressed robustly in the pronephric tubules and weakly in the pronephric duct. Expressed in the secondary heart field. In the developing nervous system, expressed in the neural crest and in the neural folds during neurula stages, and at stage 20 in the neural tube, ventral mesoderm and mid-hindbrain boundary. By early tailbud stages, expressed in the neural tube, somites and branchial arches. In tadpoles (stage 37/38), expressed in the heart, eye, otic vesicle, somites and branchial arches. Also expressed in migrating muscle cells. Expressed at a low level in limbs, with expression decreasing as limbs develop, but expressed at a high level in blastemas (regenerated limbs), where expression is localized primarily to the blastemal epidermis. Widely expressed in adults with highest expression in the spleen, skin, intestine and brain, and at a much lower level in testis and heart.

It localises to the cytoplasm. Its subcellular location is the nucleus. Its function is as follows. Transcriptional regulator (lacking a basic DNA binding domain) which negatively regulates the basic helix-loop-helix (bHLH) transcription factors by forming heterodimers and inhibiting their DNA binding and transcriptional activity. Inhibits the activity of both neurogenic (neurod1/neuroD) and myogenic (myod1/myoD) bHLH factors. May play a role in the regulation of the circadian clock. In Xenopus laevis (African clawed frog), this protein is DNA-binding protein inhibitor ID-2-A (id2-a).